The primary structure comprises 449 residues: Hyaluronidase-3 (449 aa).

A signal peptide spans 1 to 23 (MYHIWIKFLAAWIFLKKFNGVHV). 2 disulfides stabilise this stretch: cysteine 47–cysteine 340 and cysteine 211–cysteine 227. N-linked (GlcNAc...) asparagine glycans are attached at residues asparagine 67, asparagine 103, and asparagine 111. The active-site Proton donor is glutamate 135. Asparagine 153 is a glycosylation site (N-linked (GlcNAc...) asparagine). Asparagine 357 is a glycosylation site (N-linked (GlcNAc...) asparagine). Intrachain disulfides connect cysteine 365–cysteine 376, cysteine 370–cysteine 427, and cysteine 429–cysteine 438. Asparagine 401 carries an N-linked (GlcNAc...) asparagine glycan. In terms of domain architecture, EGF-like spans 427 to 438 (CQCYQGWKGLYC).

Belongs to the glycosyl hydrolase 56 family. In terms of assembly, monomer. Expressed by the venom gland.

The protein localises to the secreted. It catalyses the reaction Random hydrolysis of (1-&gt;4)-linkages between N-acetyl-beta-D-glucosamine and D-glucuronate residues in hyaluronate.. In terms of biological role, snake venom endo-hyaluronidase that degrades hyaluronan to smaller oligosaccharide fragments. In venom, it is not toxic by itself, but increases the diffusion of other venom proteins by degrading the extracellular matrix. In addition, it displays antiedematogenic activity. This chain is Hyaluronidase-3, found in Cerastes cerastes (Horned desert viper).